The following is a 266-amino-acid chain: Type III pantothenate kinase (266 aa).

6-13 is a binding site for ATP; that stretch reads DVGNSHTV. Residue 112–115 coordinates substrate; the sequence is GIDR. Asp-114 serves as the catalytic Proton acceptor. A K(+)-binding site is contributed by Asp-134. An ATP-binding site is contributed by Thr-137. Thr-190 is a substrate binding site.

This sequence belongs to the type III pantothenate kinase family. As to quaternary structure, homodimer. It depends on NH4(+) as a cofactor. The cofactor is K(+).

The protein localises to the cytoplasm. It carries out the reaction (R)-pantothenate + ATP = (R)-4'-phosphopantothenate + ADP + H(+). It functions in the pathway cofactor biosynthesis; coenzyme A biosynthesis; CoA from (R)-pantothenate: step 1/5. Functionally, catalyzes the phosphorylation of pantothenate (Pan), the first step in CoA biosynthesis. The protein is Type III pantothenate kinase of Desulfotalea psychrophila (strain LSv54 / DSM 12343).